A 348-amino-acid chain; its full sequence is Dihydroorotase (348 aa).

Zn(2+)-binding residues include His17 and His19. Residues 19–21 and Asn45 contribute to the substrate site; that span reads HLR. Zn(2+) is bound by residues Lys103, His140, and His178. Position 103 is an N6-carboxylysine (Lys103). His140 provides a ligand contact to substrate. Substrate is bound at residue Leu223. Residue Asp251 coordinates Zn(2+). Asp251 is an active-site residue. Residues His255 and Ala267 each coordinate substrate.

The protein belongs to the metallo-dependent hydrolases superfamily. DHOase family. Class II DHOase subfamily. Homodimer. The cofactor is Zn(2+).

It carries out the reaction (S)-dihydroorotate + H2O = N-carbamoyl-L-aspartate + H(+). Its pathway is pyrimidine metabolism; UMP biosynthesis via de novo pathway; (S)-dihydroorotate from bicarbonate: step 3/3. Its function is as follows. Catalyzes the reversible cyclization of carbamoyl aspartate to dihydroorotate. The chain is Dihydroorotase from Yersinia pseudotuberculosis serotype I (strain IP32953).